Reading from the N-terminus, the 794-residue chain is Interphotoreceptor matrix proteoglycan 1 (794 aa).

Positions 1–20 are cleaved as a signal peptide; it reads MHLEAARVIFFLWIFLQVQG. The span at 202–213 shows a compositional bias: polar residues; sequence MTTAQRNPQLHP. Disordered stretches follow at residues 202–221, 314–355, and 413–449; these read MTTA…RVPT, KGKA…LYPT, and SPEL…AMTS. The SEA 1 domain maps to 236–357; that stretch reads LEQKVELSIS…KQRELYPTAS (122 aa). The span at 332–351 shows a compositional bias: basic and acidic residues; sequence NKIESEGDPRGTTEEEKQRE. Residues Thr425 and Thr439 are each glycosylated (O-linked (GalNAc...) threonine). Ser443 is a glycosylation site (O-linked (GalNAc...) serine). O-linked (GalNAc...) threonine glycosylation is found at Thr448 and Thr450. In terms of domain architecture, SEA 2 spans 579 to 692; sequence RELVVFFSLR…YSLDVEPADQ (114 aa). N-linked (GlcNAc...) asparagine glycosylation occurs at Asn624. The short motif at 629–637 is the Heparin- and hyaluronan-binding element; the sequence is KQLEILNFR. The N-linked (GlcNAc...) asparagine glycan is linked to Asn656.

Highly glycosylated (N- and O-linked carbohydrates and sialic acid).

It localises to the cell projection. It is found in the cilium. The protein localises to the photoreceptor outer segment. The protein resides in the secreted. Its subcellular location is the extracellular space. It localises to the extracellular matrix. It is found in the interphotoreceptor matrix. The protein localises to the photoreceptor inner segment. Chondroitin sulfate-, heparin- and hyaluronan-binding protein. May serve to form a basic macromolecular scaffold comprising the insoluble interphotoreceptor matrix. This Bos taurus (Bovine) protein is Interphotoreceptor matrix proteoglycan 1 (IMPG1).